We begin with the raw amino-acid sequence, 178 residues long: Ribulose bisphosphate carboxylase small subunit, chloroplastic (178 aa).

The N-terminal 54 residues, 1–54 (MALISSAAVTTINRAPVQANLATPFTGLKSSAGFPVTKKNNDITSITSNGSRVN), are a transit peptide targeting the chloroplast.

The protein belongs to the RuBisCO small chain family. In terms of assembly, heterohexadecamer of 8 large and 8 small subunits.

The protein resides in the plastid. It localises to the chloroplast. Its function is as follows. RuBisCO catalyzes two reactions: the carboxylation of D-ribulose 1,5-bisphosphate, the primary event in carbon dioxide fixation, as well as the oxidative fragmentation of the pentose substrate. Both reactions occur simultaneously and in competition at the same active site. Although the small subunit is not catalytic it is essential for maximal activity. The protein is Ribulose bisphosphate carboxylase small subunit, chloroplastic of Trifolium repens (Creeping white clover).